Reading from the N-terminus, the 453-residue chain is Phosphoglucosamine mutase (453 aa).

The active-site Phosphoserine intermediate is S102. Mg(2+) contacts are provided by S102, D244, D246, and D248. Position 102 is a phosphoserine (S102).

Belongs to the phosphohexose mutase family. It depends on Mg(2+) as a cofactor. Post-translationally, activated by phosphorylation.

It catalyses the reaction alpha-D-glucosamine 1-phosphate = D-glucosamine 6-phosphate. Functionally, catalyzes the conversion of glucosamine-6-phosphate to glucosamine-1-phosphate. The sequence is that of Phosphoglucosamine mutase from Pelobacter propionicus (strain DSM 2379 / NBRC 103807 / OttBd1).